The chain runs to 601 residues: Glutamyl-tRNA(Gln) amidotransferase subunit B, mitochondrial (601 aa).

Residues 1 to 52 (MLQQWLRQSPGAARFLRGSCCRGPQSGSLRHSPLPTAPHRCIRSLQTSATES) constitute a mitochondrion transit peptide.

This sequence belongs to the GatB/GatE family. GatB subfamily. Subunit of the heterotrimeric GatCAB amidotransferase (AdT) complex, composed of A, B and C subunits.

It localises to the mitochondrion. The catalysed reaction is L-glutamyl-tRNA(Gln) + L-glutamine + ATP + H2O = L-glutaminyl-tRNA(Gln) + L-glutamate + ADP + phosphate + H(+). In terms of biological role, allows the formation of correctly charged Gln-tRNA(Gln) through the transamidation of misacylated Glu-tRNA(Gln) in the mitochondria. The reaction takes place in the presence of glutamine and ATP through an activated gamma-phospho-Glu-tRNA(Gln). The polypeptide is Glutamyl-tRNA(Gln) amidotransferase subunit B, mitochondrial (Neosartorya fischeri (strain ATCC 1020 / DSM 3700 / CBS 544.65 / FGSC A1164 / JCM 1740 / NRRL 181 / WB 181) (Aspergillus fischerianus)).